The following is an 884-amino-acid chain: Translation initiation factor IF-2 (884 aa).

2 disordered regions span residues 42 to 62 and 123 to 254; these read DVQK…QEEV and EPKG…GGKK. Over residues 194 to 212 the composition is skewed to basic and acidic residues; it reads PAERREVVIPPKRKMEERA. A compositionally biased stretch (low complexity) spans 234–248; the sequence is EPETPAGGAPGAKKG. In terms of domain architecture, tr-type G spans 384–553; the sequence is KRPPVVTIMG…LLQADVMDLK (170 aa). The interval 393 to 400 is G1; it reads GHVDHGKT. 393–400 contributes to the GTP binding site; sequence GHVDHGKT. A G2 region spans residues 418-422; sequence GITQH. The G3 stretch occupies residues 439–442; that stretch reads DTPG. GTP-binding positions include 439–443 and 493–496; these read DTPGH and NKID. The G4 stretch occupies residues 493–496; that stretch reads NKID. The segment at 529–531 is G5; it reads SAK.

Belongs to the TRAFAC class translation factor GTPase superfamily. Classic translation factor GTPase family. IF-2 subfamily.

The protein localises to the cytoplasm. In terms of biological role, one of the essential components for the initiation of protein synthesis. Protects formylmethionyl-tRNA from spontaneous hydrolysis and promotes its binding to the 30S ribosomal subunits. Also involved in the hydrolysis of GTP during the formation of the 70S ribosomal complex. The polypeptide is Translation initiation factor IF-2 (Geobacter metallireducens (strain ATCC 53774 / DSM 7210 / GS-15)).